The sequence spans 314 residues: WD repeat domain-containing protein 83 (314 aa).

WD repeat units follow at residues 23–62 (CNQG…LLKT), 65–104 (GHGY…VVRK), 107–146 (GHAG…PEAI), 151–188 (EAKD…MCAD), 189–228 (YLGS…LLGE), 231–272 (GHQN…LVLK), and 275–313 (VGKA…EEGG).

The protein belongs to the WD repeat MORG1 family.

The protein resides in the cytoplasm. In terms of biological role, molecular scaffold protein for various multimeric protein complexes. Acts as a module in the assembly of a multicomponent scaffold for the ERK pathway, linking ERK responses to specific agonists. Also involved in response to hypoxia by acting as a negative regulator of HIF1A/HIF-1-alpha. The sequence is that of WD repeat domain-containing protein 83 (wdr83) from Xenopus tropicalis (Western clawed frog).